The chain runs to 224 residues: Glutathione peroxidase 3 (224 aa).

The signal sequence occupies residues 1 to 18; sequence MAPGSVLSLAVALATIIG. N38 carries an N-linked (GlcNAc...) asparagine glycan. Residue C73 is part of the active site.

The protein belongs to the glutathione peroxidase family.

The protein resides in the secreted. Its subcellular location is the extracellular space. It catalyses the reaction 2 glutathione + H2O2 = glutathione disulfide + 2 H2O. The polypeptide is Glutathione peroxidase 3 (gpx-3) (Caenorhabditis elegans).